The chain runs to 85 residues: Progonadoliberin-2 (85 aa).

The N-terminal stretch at 1 to 23 (MCVSRLVLLFGLLLCVGAQLSNA) is a signal peptide. Residue Q24 is modified to Pyrrolidone carboxylic acid. G33 is subject to Glycine amide.

The protein belongs to the GnRH family.

It is found in the secreted. In terms of biological role, stimulates the secretion of gonadotropins. The polypeptide is Progonadoliberin-2 (gnrh2) (Morone saxatilis (Striped bass)).